Here is an 85-residue protein sequence, read N- to C-terminus: MKLFLLLVFFASMLIDGLVNADGYIRGSNGCKISCLWGNEGCNKECKGFGAYYGYCWTWGLACWCEGLPDDKTWKSESNTCGGKK.

The signal sequence occupies residues 1–21 (MKLFLLLVFFASMLIDGLVNA). An LCN-type CS-alpha/beta domain is found at 22–82 (DGYIRGSNGC…TWKSESNTCG (61 aa)). Cystine bridges form between Cys-31/Cys-81, Cys-35/Cys-56, Cys-42/Cys-63, and Cys-46/Cys-65. Gly-82 carries the post-translational modification Glycine amide.

The protein belongs to the long (4 C-C) scorpion toxin superfamily. Sodium channel inhibitor family. In terms of tissue distribution, expressed by the venom gland.

It localises to the secreted. Its function is as follows. Causes a slow progressive depressant flaccid paralysis, when injected into S.falculata blowfly larvae. Inhibits dose-dependently the total sodium (Nav) currents both in dorsal root ganglia neurons and in ventricular myocytes. Is toxic to mice by intravenous injection, but not by subcutaneous or intracerebroventricular injection. Produces antiarrhythmia in rat. Is then active on both mammals and insects. This Olivierus martensii (Manchurian scorpion) protein is Depressant scorpion toxin BmKIM (KIM2).